The following is a 420-amino-acid chain: MALIRRVALLSLHTSPMEQPGSGDAGGMNVYIRELASALAEAGVEVEIFTRATSASQPAVEHPDPGVCVHNVLAGPTKKIPKEELPGLLHSMVEEIEQIRRRQPHGRYDVIHSHYWVSGIAGLELSELWGVPLVHTMHTMAKVKNLLLESGEQPEPRRREVGEHRIVDGAARLIANTSSEAAELVSHYGADYDRIDIAPPGVDLATFTPAFRTKARRDHGVDPGTFHLLFAGRIQRLKGPQVLVKAAALLRQRRPDIDLRLTILGELSGNKEFNLRKLVADAEMDDVVTQLPPVTAPELAAWFRAADVVVMPSFSESFGLVALEAQACGTPVVATRVGGLSRAIFHGRTGLLVDGHHAADWADAFEALYDDPATRVDMGRAAAIRAQNSGWSRTAAITLESYHAAVDRHVGHLVPAVPVT.

H13 lines the 1D-myo-inositol 3-phosphate pocket. Residues 19 to 20 and G27 each bind UDP-N-acetyl-alpha-D-glucosamine; that span reads QP. Residues 24 to 29, K82, Y115, T139, and R159 contribute to the 1D-myo-inositol 3-phosphate site; that span reads DAGGMN. UDP-N-acetyl-alpha-D-glucosamine-binding residues include R233, K238, and V294. Mg(2+)-binding residues include F303, R304, and A306. 2 residues coordinate UDP-N-acetyl-alpha-D-glucosamine: E316 and E324. Position 330 (T330) interacts with Mg(2+).

This sequence belongs to the glycosyltransferase group 1 family. MshA subfamily. As to quaternary structure, homodimer.

The catalysed reaction is 1D-myo-inositol 3-phosphate + UDP-N-acetyl-alpha-D-glucosamine = 1D-myo-inositol 2-acetamido-2-deoxy-alpha-D-glucopyranoside 3-phosphate + UDP + H(+). Catalyzes the transfer of a N-acetyl-glucosamine moiety to 1D-myo-inositol 3-phosphate to produce 1D-myo-inositol 2-acetamido-2-deoxy-glucopyranoside 3-phosphate in the mycothiol biosynthesis pathway. The sequence is that of D-inositol 3-phosphate glycosyltransferase from Pseudarthrobacter chlorophenolicus (strain ATCC 700700 / DSM 12829 / CIP 107037 / JCM 12360 / KCTC 9906 / NCIMB 13794 / A6) (Arthrobacter chlorophenolicus).